Here is an 879-residue protein sequence, read N- to C-terminus: Alanine--tRNA ligase (879 aa).

Positions 426–449 (KQKERARNARGNMDGESWKEDPLS) are disordered. Residues His566, His570, Cys668, and His672 each contribute to the Zn(2+) site.

This sequence belongs to the class-II aminoacyl-tRNA synthetase family. The cofactor is Zn(2+).

The protein localises to the cytoplasm. It catalyses the reaction tRNA(Ala) + L-alanine + ATP = L-alanyl-tRNA(Ala) + AMP + diphosphate. Functionally, catalyzes the attachment of alanine to tRNA(Ala) in a two-step reaction: alanine is first activated by ATP to form Ala-AMP and then transferred to the acceptor end of tRNA(Ala). Also edits incorrectly charged Ser-tRNA(Ala) and Gly-tRNA(Ala) via its editing domain. The sequence is that of Alanine--tRNA ligase from Clostridioides difficile (strain 630) (Peptoclostridium difficile).